The following is a 117-amino-acid chain: MRTLLIRYILWRNDNDQTYYNDNFKKLMLLDELVDDGDVCTLIKNMRMTLSDGPLLDRLNQPVNNIEDAKRMIAISAKVARDIGERSEIRWEESFTILFRMIETYFDDLMIDLYGEK.

It belongs to the poxviridae OPG035 family.

Bcl-2-like protein which contributes to virulence by preventing host NF-kappa-B activation in response to pro-inflammatory stimuli such as TNF-alpha or IL1B. The chain is Protein OPG035 (OPG035) from Bos taurus (Bovine).